A 361-amino-acid polypeptide reads, in one-letter code: POU domain, class 3, transcription factor 4-A (361 aa).

Disordered regions lie at residues His-100–Ile-131, Leu-150–Pro-189, and Glu-333–Leu-361. The segment covering Ala-119–Ile-131 has biased composition (polar residues). The span at Val-165–His-183 shows a compositional bias: basic and acidic residues. Residues Glu-186–Asp-260 form the POU-specific domain. The homeobox DNA-binding region spans Lys-278–Thr-337.

It belongs to the POU transcription factor family. Class-3 subfamily. As to expression, from embryonic stage 10, expressed in the Spemann's organizer. During gastrulation, expressed in both the involuting mesoderm and the overlying neuroectoderm. During the neural plate and neural fold stages, expressed in the entire neuroectoderm with expression in discrete regions of the developing nervous system persisting at later stages. Transiently expressed in the pronephros from stages 24-32. In adults, expressed in the kidney and brain.

The protein resides in the nucleus. Its function is as follows. Transcriptional activator. Induces neural-specific gene expression to act as a key regulator of neural differentiation. This is POU domain, class 3, transcription factor 4-A (pou3f4-a) from Xenopus laevis (African clawed frog).